Reading from the N-terminus, the 650-residue chain is Chaperone protein HtpG (650 aa).

The interval Met-1 to Arg-349 is a; substrate-binding. Residues Glu-350 to Arg-566 are b. Positions Ile-567–Glu-650 are c.

It belongs to the heat shock protein 90 family. Homodimer.

It localises to the cytoplasm. Molecular chaperone. Has ATPase activity. This Geobacter metallireducens (strain ATCC 53774 / DSM 7210 / GS-15) protein is Chaperone protein HtpG.